The following is a 296-amino-acid chain: GTPase Era (296 aa).

In terms of domain architecture, Era-type G spans 7 to 174 (KCSMNAIVGT…INYLCEISPS (168 aa)). The tract at residues 15 to 22 (GTTNAGKS) is G1. GTP is bound at residue 15–22 (GTTNAGKS). A G2 region spans residues 41 to 45 (QTTRV). The interval 62–65 (DTPG) is G3. GTP contacts are provided by residues 62 to 66 (DTPGI) and 124 to 127 (NKID). A G4 region spans residues 124–127 (NKID). The tract at residues 153-155 (ISA) is G5. The KH type-2 domain maps to 205–282 (LHHELPYSLS…HLFLFVKVRE (78 aa)).

It belongs to the TRAFAC class TrmE-Era-EngA-EngB-Septin-like GTPase superfamily. Era GTPase family. Monomer.

It is found in the cytoplasm. It localises to the cell inner membrane. An essential GTPase that binds both GDP and GTP, with rapid nucleotide exchange. Plays a role in 16S rRNA processing and 30S ribosomal subunit biogenesis and possibly also in cell cycle regulation and energy metabolism. The sequence is that of GTPase Era from Ehrlichia canis (strain Jake).